A 428-amino-acid chain; its full sequence is Histone-lysine N-methyltransferase SMYD3 (428 aa).

Met-1 carries the post-translational modification N-acetylmethionine. Residues Leu-4 to Leu-240 enclose the SET domain. Arg-14–Asn-16 contacts S-adenosyl-L-methionine. Zn(2+)-binding residues include Cys-49, Cys-52, Cys-62, Cys-65, Cys-71, Cys-75, His-83, and Cys-87. An MYND-type zinc finger spans residues Cys-49–Cys-87. Residues Tyr-124, Asn-132, Asn-205 to His-206, Tyr-239, and Phe-259 each bind S-adenosyl-L-methionine. Residues Asp-272 to Ser-428 are C-terminal domain; essential for histone methyltransferase activity, nuclear localization and mediates interaction with HSP90AA1.

It belongs to the class V-like SAM-binding methyltransferase superfamily. Histone-lysine methyltransferase family. In terms of assembly, interacts with HSPCA. Interacts with HELZ. Interacts with POLR2A; the interaction may be indirect and may be mediated by HELZ. Interacts with HSP90AA1; this interaction enhances SMYD3 histone-lysine N-methyltransferase.

It is found in the cytoplasm. It localises to the nucleus. The enzyme catalyses L-lysyl(4)-[histone H3] + 3 S-adenosyl-L-methionine = N(6),N(6),N(6)-trimethyl-L-lysyl(4)-[histone H3] + 3 S-adenosyl-L-homocysteine + 3 H(+). With respect to regulation, histone methyltransferase activity strongly stimulated by HSPCA. Its function is as follows. Histone methyltransferase. Specifically methylates 'Lys-4' of histone H3, inducing di- and tri-methylation, but not monomethylation. Also methylates 'Lys-5' of histone H4. Plays an important role in transcriptional activation as a member of an RNA polymerase complex. Binds DNA containing 5'-CCCTCC-3' or 5'-GAGGGG-3' sequences. The sequence is that of Histone-lysine N-methyltransferase SMYD3 (Smyd3) from Mus musculus (Mouse).